A 762-amino-acid polypeptide reads, in one-letter code: Multifunctional tryptophan biosynthesis protein (762 aa).

Residues 25–224 (NLILIDNYDS…LHMQGGTWAE (200 aa)) form the Glutamine amidotransferase type-1 domain. 76–78 (GPG) is an L-glutamine binding site. The Nucleophile; for GATase activity role is filled by Cys104. L-glutamine is bound by residues Gln108 and 154–155 (SL). Catalysis depends on for GATase activity residues His198 and Glu200. Residues 251-515 (ILQKIYAHRK…DATQFIRELC (265 aa)) are indole-3-glycerol phosphate synthase. The segment at 531 to 762 (LVKICGTRSA…EFVKAAKSVR (232 aa)) is N-(5'-phosphoribosyl)anthranilate isomerase.

In terms of assembly, tetramer of two components I and two components II.

The enzyme catalyses chorismate + L-glutamine = anthranilate + pyruvate + L-glutamate + H(+). The catalysed reaction is N-(5-phospho-beta-D-ribosyl)anthranilate = 1-(2-carboxyphenylamino)-1-deoxy-D-ribulose 5-phosphate. It catalyses the reaction 1-(2-carboxyphenylamino)-1-deoxy-D-ribulose 5-phosphate + H(+) = (1S,2R)-1-C-(indol-3-yl)glycerol 3-phosphate + CO2 + H2O. It participates in amino-acid biosynthesis; L-tryptophan biosynthesis; L-tryptophan from chorismate: step 1/5. The protein operates within amino-acid biosynthesis; L-tryptophan biosynthesis; L-tryptophan from chorismate: step 3/5. Its pathway is amino-acid biosynthesis; L-tryptophan biosynthesis; L-tryptophan from chorismate: step 4/5. Trifunctional enzyme bearing the Gln amidotransferase (GATase) domain of anthranilate synthase, indole-glycerolphosphate synthase, and phosphoribosylanthranilate isomerase activities. The protein is Multifunctional tryptophan biosynthesis protein (trp-1) of Neurospora crassa (strain ATCC 24698 / 74-OR23-1A / CBS 708.71 / DSM 1257 / FGSC 987).